Consider the following 147-residue polypeptide: Large ribosomal subunit protein uL11 (147 aa).

Belongs to the universal ribosomal protein uL11 family. As to quaternary structure, part of the ribosomal stalk of the 50S ribosomal subunit. Interacts with L10 and the large rRNA to form the base of the stalk. L10 forms an elongated spine to which L12 dimers bind in a sequential fashion forming a multimeric L10(L12)X complex. In terms of processing, one or more lysine residues are methylated.

Functionally, forms part of the ribosomal stalk which helps the ribosome interact with GTP-bound translation factors. The chain is Large ribosomal subunit protein uL11 from Cytophaga hutchinsonii (strain ATCC 33406 / DSM 1761 / CIP 103989 / NBRC 15051 / NCIMB 9469 / D465).